Here is a 286-residue protein sequence, read N- to C-terminus: ATP synthase gamma chain (286 aa).

Belongs to the ATPase gamma chain family. In terms of assembly, F-type ATPases have 2 components, CF(1) - the catalytic core - and CF(0) - the membrane proton channel. CF(1) has five subunits: alpha(3), beta(3), gamma(1), delta(1), epsilon(1). CF(0) has three main subunits: a, b and c.

The protein resides in the cell membrane. Its function is as follows. Produces ATP from ADP in the presence of a proton gradient across the membrane. The gamma chain is believed to be important in regulating ATPase activity and the flow of protons through the CF(0) complex. This is ATP synthase gamma chain from Bacillus anthracis (strain A0248).